A 474-amino-acid chain; its full sequence is Cysteine--tRNA ligase (474 aa).

Residue Cys-27 coordinates Zn(2+). The short motif at 29-39 (ITPYDHMHVGH) is the 'HIGH' region element. Cys-213, His-238, and Glu-242 together coordinate Zn(2+). The 'KMSKS' region motif lies at 271–275 (KMSKS). Residue Lys-274 coordinates ATP.

This sequence belongs to the class-I aminoacyl-tRNA synthetase family. Zn(2+) serves as cofactor.

The protein resides in the cytoplasm. It catalyses the reaction tRNA(Cys) + L-cysteine + ATP = L-cysteinyl-tRNA(Cys) + AMP + diphosphate. This chain is Cysteine--tRNA ligase, found in Pyrobaculum neutrophilum (strain DSM 2338 / JCM 9278 / NBRC 100436 / V24Sta) (Thermoproteus neutrophilus).